A 227-amino-acid polypeptide reads, in one-letter code: Cytidylate kinase (227 aa).

Glycine 12 to threonine 20 is a binding site for ATP.

The protein belongs to the cytidylate kinase family. Type 1 subfamily.

The protein resides in the cytoplasm. It carries out the reaction CMP + ATP = CDP + ADP. It catalyses the reaction dCMP + ATP = dCDP + ADP. In Shewanella denitrificans (strain OS217 / ATCC BAA-1090 / DSM 15013), this protein is Cytidylate kinase.